We begin with the raw amino-acid sequence, 150 residues long: Ribonuclease K6 (150 aa).

Residues 1 to 23 form the signal peptide; the sequence is MVLCFPLLLLLLVLWGPVCPLHA. The active-site Proton acceptor is His-38. Intrachain disulfides connect Cys-46-Cys-104, Cys-60-Cys-114, Cys-78-Cys-129, and Cys-85-Cys-92. N-linked (GlcNAc...) asparagine glycosylation occurs at Asn-55. Substrate is bound by residues 61 to 65 and Lys-86; that span reads KHQNT. The N-linked (GlcNAc...) asparagine glycan is linked to Asn-100. Arg-105 provides a ligand contact to substrate. The Proton donor role is filled by His-145.

It belongs to the pancreatic ribonuclease family. In terms of assembly, interacts (via N-terminus) with bacterial lipopolysaccharide (LPS).

It localises to the secreted. Its subcellular location is the lysosome. The protein resides in the cytoplasmic granule. Its function is as follows. Ribonuclease which shows a preference for the pyrimidines uridine and cytosine. Has potent antibacterial activity against a range of Gram-positive and Gram-negative bacteria, including P.aeruginosa, A.baumanii, M.luteus, S.aureus, E.faecalis, E.faecium, S.saprophyticus and E.coli. Causes loss of bacterial membrane integrity, and also promotes agglutination of Gram-negative bacteria. Probably contributes to urinary tract sterility. Bactericidal activity is independent of RNase activity. The chain is Ribonuclease K6 (RNASE6) from Gorilla gorilla gorilla (Western lowland gorilla).